A 305-amino-acid chain; its full sequence is Porphobilinogen deaminase (305 aa).

Cysteine 243 is modified (S-(dipyrrolylmethanemethyl)cysteine).

This sequence belongs to the HMBS family. In terms of assembly, monomer. Dipyrromethane is required as a cofactor.

It carries out the reaction 4 porphobilinogen + H2O = hydroxymethylbilane + 4 NH4(+). The protein operates within porphyrin-containing compound metabolism; protoporphyrin-IX biosynthesis; coproporphyrinogen-III from 5-aminolevulinate: step 2/4. Tetrapolymerization of the monopyrrole PBG into the hydroxymethylbilane pre-uroporphyrinogen in several discrete steps. This is Porphobilinogen deaminase from Limosilactobacillus reuteri (strain DSM 20016) (Lactobacillus reuteri).